A 239-amino-acid polypeptide reads, in one-letter code: tRNA (guanine-N(7)-)-methyltransferase (239 aa).

The S-adenosyl-L-methionine site is built by Glu69, Glu94, Asp121, and Asp144. The active site involves Asp144. A substrate-binding site is contributed by Lys148. The interval 150-155 (RHNKRR) is interaction with RNA. Substrate is bound by residues Asp180 and 217 to 220 (TKFE).

Belongs to the class I-like SAM-binding methyltransferase superfamily. TrmB family. Monomer.

The enzyme catalyses guanosine(46) in tRNA + S-adenosyl-L-methionine = N(7)-methylguanosine(46) in tRNA + S-adenosyl-L-homocysteine. The protein operates within tRNA modification; N(7)-methylguanine-tRNA biosynthesis. In terms of biological role, catalyzes the formation of N(7)-methylguanine at position 46 (m7G46) in tRNA. The chain is tRNA (guanine-N(7)-)-methyltransferase from Photorhabdus laumondii subsp. laumondii (strain DSM 15139 / CIP 105565 / TT01) (Photorhabdus luminescens subsp. laumondii).